The primary structure comprises 94 residues: Large ribosomal subunit protein eL43A (94 aa).

A C4-type zinc finger spans residues 39–62; it reads CPFCGRNTVKRTAAGIWCCNGKGC.

It belongs to the eukaryotic ribosomal protein eL43 family. In terms of assembly, component of the large ribosomal subunit (LSU). Mature yeast ribosomes consist of a small (40S) and a large (60S) subunit. The 40S small subunit contains 1 molecule of ribosomal RNA (18S rRNA) and at least 33 different proteins. The large 60S subunit contains 3 rRNA molecules (25S, 5.8S and 5S rRNA) and at least 46 different proteins.

The protein resides in the cytoplasm. In terms of biological role, component of the ribosome, a large ribonucleoprotein complex responsible for the synthesis of proteins in the cell. The small ribosomal subunit (SSU) binds messenger RNAs (mRNAs) and translates the encoded message by selecting cognate aminoacyl-transfer RNA (tRNA) molecules. The large subunit (LSU) contains the ribosomal catalytic site termed the peptidyl transferase center (PTC), which catalyzes the formation of peptide bonds, thereby polymerizing the amino acids delivered by tRNAs into a polypeptide chain. The nascent polypeptides leave the ribosome through a tunnel in the LSU and interact with protein factors that function in enzymatic processing, targeting, and the membrane insertion of nascent chains at the exit of the ribosomal tunnel. In Schizosaccharomyces pombe (strain 972 / ATCC 24843) (Fission yeast), this protein is Large ribosomal subunit protein eL43A (rpl4301).